The chain runs to 115 residues: NADH-ubiquinone oxidoreductase chain 3 (115 aa).

The next 3 helical transmembrane spans lie at 3–23 (LFVALFINASLSFILISVAFW), 55–75 (FFLVAITFLLFDLEIALLLPL), and 84–104 (LSAMMITSFILISILALGLIY).

It belongs to the complex I subunit 3 family. Core subunit of respiratory chain NADH dehydrogenase (Complex I) which is composed of 45 different subunits. Interacts with TMEM186. Interacts with TMEM242.

The protein localises to the mitochondrion inner membrane. The catalysed reaction is a ubiquinone + NADH + 5 H(+)(in) = a ubiquinol + NAD(+) + 4 H(+)(out). In terms of biological role, core subunit of the mitochondrial membrane respiratory chain NADH dehydrogenase (Complex I) which catalyzes electron transfer from NADH through the respiratory chain, using ubiquinone as an electron acceptor. Essential for the catalytic activity of complex I. This is NADH-ubiquinone oxidoreductase chain 3 from Sigmodon hispidus (Hispid cotton rat).